Reading from the N-terminus, the 950-residue chain is UvrABC system protein A (950 aa).

36–43 lines the ATP pocket; it reads GKSGSGKS. The C4-type zinc finger occupies 260–287; it reads CPLCGFSLPLIEPRLFSFNSPFGACSEC. ABC transporter domains lie at 317 to 599 and 619 to 947; these read FKTS…KNSL and ADKG…MFLK. 651-658 is a binding site for ATP; it reads GVSGSGKS. The segment at 750–776 adopts a C4-type zinc-finger fold; it reads CEKCQGDGYLNIQMHFLPDVFVPCDLC.

It belongs to the ABC transporter superfamily. UvrA family. Forms a heterotetramer with UvrB during the search for lesions.

Its subcellular location is the cytoplasm. In terms of biological role, the UvrABC repair system catalyzes the recognition and processing of DNA lesions. UvrA is an ATPase and a DNA-binding protein. A damage recognition complex composed of 2 UvrA and 2 UvrB subunits scans DNA for abnormalities. When the presence of a lesion has been verified by UvrB, the UvrA molecules dissociate. The protein is UvrABC system protein A of Borreliella burgdorferi (strain ATCC 35210 / DSM 4680 / CIP 102532 / B31) (Borrelia burgdorferi).